A 313-amino-acid chain; its full sequence is Ribosomal RNA small subunit methyltransferase H (313 aa).

S-adenosyl-L-methionine-binding positions include 35–37 (GGH), D55, F79, D100, and Q107.

The protein belongs to the methyltransferase superfamily. RsmH family.

The protein localises to the cytoplasm. It catalyses the reaction cytidine(1402) in 16S rRNA + S-adenosyl-L-methionine = N(4)-methylcytidine(1402) in 16S rRNA + S-adenosyl-L-homocysteine + H(+). Its function is as follows. Specifically methylates the N4 position of cytidine in position 1402 (C1402) of 16S rRNA. The chain is Ribosomal RNA small subunit methyltransferase H from Burkholderia thailandensis (strain ATCC 700388 / DSM 13276 / CCUG 48851 / CIP 106301 / E264).